We begin with the raw amino-acid sequence, 302 residues long: Digeranylgeranylglyceryl phosphate synthase (302 aa).

A run of 8 helical transmembrane segments spans residues 21-41 (LVVA…IYGG), 43-63 (IVSS…AGGY), 103-123 (IGLI…FAVL), 144-164 (IVIA…ASCM), 167-187 (GKVV…LLVL), 218-238 (AYMA…FPYI), 244-264 (MAYL…LAIL), and 282-302 (ARSA…AGLM).

Belongs to the UbiA prenyltransferase family. DGGGP synthase subfamily. It depends on Mg(2+) as a cofactor.

The protein resides in the cell membrane. It catalyses the reaction sn-3-O-(geranylgeranyl)glycerol 1-phosphate + (2E,6E,10E)-geranylgeranyl diphosphate = 2,3-bis-O-(geranylgeranyl)-sn-glycerol 1-phosphate + diphosphate. It participates in membrane lipid metabolism; glycerophospholipid metabolism. Its function is as follows. Prenyltransferase that catalyzes the transfer of the geranylgeranyl moiety of geranylgeranyl diphosphate (GGPP) to the C2 hydroxyl of (S)-3-O-geranylgeranylglyceryl phosphate (GGGP). This reaction is the second ether-bond-formation step in the biosynthesis of archaeal membrane lipids. This chain is Digeranylgeranylglyceryl phosphate synthase, found in Hyperthermus butylicus (strain DSM 5456 / JCM 9403 / PLM1-5).